The chain runs to 1134 residues: DENN domain-containing protein 2B (1134 aa).

Over residues 1–13 (MTMTANKNSSITH) the composition is skewed to polar residues. The interval 1-90 (MTMTANKNSS…DPSPETSPPI (90 aa)) is disordered. Phosphoserine is present on residues S30 and S32. Pro residues predominate over residues 32-43 (SPPPVLYPPRSP). Phosphothreonine is present on T228. Position 230 is a phosphoserine (S230). Disordered stretches follow at residues 233–273 (SYPE…GIRK) and 289–571 (LKEQ…KRHS). Basic and acidic residues predominate over residues 249-259 (SLYRLEKRPGR). Over residues 315-348 (GTLGTLEEPTGTASVSPSSRAGGVAGVAGEAGPP) the composition is skewed to low complexity. Phosphothreonine is present on T361. S365 is modified (phosphoserine). Residues 370–385 (LLPPKSSPDPAVNPVP) are compositionally biased toward pro residues. A compositionally biased stretch (basic and acidic residues) spans 389–399 (RTFEYEADKNP). The span at 406–428 (GLPPSPTPAAPPPLPSTPAPPVT) shows a compositional bias: pro residues. Over residues 429–443 (RRPKKDMRGHRKSQN) the composition is skewed to basic residues. Positions 453–478 (SSLQSLYPSSPTENGTESQPKFGSKS) are enriched in polar residues. Residue T479 is modified to Phosphothreonine. Polar residues-rich tracts occupy residues 511–521 (KSQQLSENSLD) and 542–555 (SLKS…SGNW). S542 bears the Phosphoserine mark. The segment covering 559-570 (KSHRLPRLPKRH) has biased composition (basic residues). A phosphoserine mark is found at S571 and S619. The segment at 633 to 658 (LSMSSLETASLRDENSESESDSDDRF) is disordered. Residues 695 to 843 (EYFVVVSLKK…PFPAPGKTIK (149 aa)) form the uDENN domain. Positions 865–998 (RLEHVDFECL…LQAALEQALE (134 aa)) constitute a cDENN domain. The dDENN domain maps to 1000 to 1093 (KSELISQDSD…QDRELRKCRA (94 aa)).

Interacts with ITSN1 and GRB2. Isoform 1 interacts with the SH3 domain of ABL1. Post-translationally, phosphorylated. Phosphorylation decreases ITSN1 binding.

It localises to the cytoplasm. The protein localises to the cell cortex. The protein resides in the cell membrane. Its subcellular location is the recycling endosome. Functionally, may be involved in cytoskeletal organization and tumorogenicity. Seems to be involved in a signaling transduction pathway leading to activation of MAPK1/ERK2. Plays a role in EGFR trafficking from recycling endosomes back to the cell membrane. Its function is as follows. Guanine nucleotide exchange factor (GEF) which may activate RAB9A and RAB9B. Promotes the exchange of GDP to GTP, converting inactive GDP-bound Rab proteins into their active GTP-bound form. May block ERK2 activation stimulated by ABL1. May alter cell morphology and cell growth. This Mus musculus (Mouse) protein is DENN domain-containing protein 2B (Dennd2b).